The primary structure comprises 153 residues: Ribosome maturation factor RimP (153 aa).

The protein belongs to the RimP family.

The protein localises to the cytoplasm. In terms of biological role, required for maturation of 30S ribosomal subunits. This is Ribosome maturation factor RimP from Histophilus somni (strain 2336) (Haemophilus somnus).